Here is a 258-residue protein sequence, read N- to C-terminus: Small ribosomal subunit protein mS40 (258 aa).

The transit peptide at 1-35 (MAASILNVLLRRLPGVSPFRGAYGVQVLLQTLCTK) directs the protein to the mitochondrion. Serine 49 carries the post-translational modification Phosphoserine. A disordered region spans residues 223-258 (RLREESGPPPELMPEVPLTAPAEASSTEPGAPQSAL).

The protein belongs to the bacterial ribosomal protein bS18 family. Mitochondrion-specific ribosomal protein mS40 subfamily. In terms of assembly, component of the mitochondrial ribosome small subunit (28S) which comprises a 12S rRNA and about 30 distinct proteins.

It is found in the mitochondrion. The polypeptide is Small ribosomal subunit protein mS40 (MRPS18B) (Sus scrofa (Pig)).